The primary structure comprises 442 residues: Tubulin beta chain (442 aa).

Residues Q11, E69, S138, G142, T143, G144, N204, and N226 each coordinate GTP. E69 lines the Mg(2+) pocket.

It belongs to the tubulin family. Dimer of alpha and beta chains. A typical microtubule is a hollow water-filled tube with an outer diameter of 25 nm and an inner diameter of 15 nM. Alpha-beta heterodimers associate head-to-tail to form protofilaments running lengthwise along the microtubule wall with the beta-tubulin subunit facing the microtubule plus end conferring a structural polarity. Microtubules usually have 13 protofilaments but different protofilament numbers can be found in some organisms and specialized cells. The cofactor is Mg(2+).

Its subcellular location is the cytoplasm. The protein localises to the cytoskeleton. Its function is as follows. Tubulin is the major constituent of microtubules, a cylinder consisting of laterally associated linear protofilaments composed of alpha- and beta-tubulin heterodimers. Microtubules grow by the addition of GTP-tubulin dimers to the microtubule end, where a stabilizing cap forms. Below the cap, tubulin dimers are in GDP-bound state, owing to GTPase activity of alpha-tubulin. In Pneumocystis carinii, this protein is Tubulin beta chain (TUB-B).